Consider the following 431-residue polypeptide: Probable glucarate dehydratase (431 aa).

Residues His-29, Thr-108, Tyr-153, and Lys-198 each contribute to the substrate site. The active-site Proton acceptor is Lys-200. Mg(2+)-binding residues include Asp-228 and Asn-276. Substrate contacts are provided by residues 228–230, Asn-276, 327–329, His-356, and Arg-410; these read DPN and HSN. Residue His-327 is the Proton acceptor of the active site.

It belongs to the mandelate racemase/muconate lactonizing enzyme family. GlucD subfamily. Mg(2+) is required as a cofactor.

It carries out the reaction D-glucarate = 5-dehydro-4-deoxy-D-glucarate + H2O. The protein operates within carbohydrate acid metabolism; D-glucarate degradation; 2,5-dioxopentanoate from D-glucarate: step 1/2. In terms of biological role, catalyzes the dehydration of glucarate to 5-keto-4-deoxy-D-glucarate (5-kdGluc). The chain is Probable glucarate dehydratase (gudD) from Streptomyces coelicolor (strain ATCC BAA-471 / A3(2) / M145).